A 278-amino-acid polypeptide reads, in one-letter code: 4-deoxy-L-threo-5-hexosulose-uronate ketol-isomerase (278 aa).

Zn(2+)-binding residues include His-196, His-198, Glu-203, and His-245.

This sequence belongs to the KduI family. Zn(2+) serves as cofactor.

The enzyme catalyses 5-dehydro-4-deoxy-D-glucuronate = 3-deoxy-D-glycero-2,5-hexodiulosonate. It functions in the pathway glycan metabolism; pectin degradation; 2-dehydro-3-deoxy-D-gluconate from pectin: step 4/5. In terms of biological role, catalyzes the isomerization of 5-dehydro-4-deoxy-D-glucuronate to 3-deoxy-D-glycero-2,5-hexodiulosonate. This is 4-deoxy-L-threo-5-hexosulose-uronate ketol-isomerase from Paraburkholderia phytofirmans (strain DSM 17436 / LMG 22146 / PsJN) (Burkholderia phytofirmans).